The primary structure comprises 226 residues: Putative N-acetylmannosamine-6-phosphate 2-epimerase 1 (226 aa).

It belongs to the NanE family.

It catalyses the reaction an N-acyl-D-glucosamine 6-phosphate = an N-acyl-D-mannosamine 6-phosphate. It functions in the pathway amino-sugar metabolism; N-acetylneuraminate degradation; D-fructose 6-phosphate from N-acetylneuraminate: step 3/5. Converts N-acetylmannosamine-6-phosphate (ManNAc-6-P) to N-acetylglucosamine-6-phosphate (GlcNAc-6-P). The chain is Putative N-acetylmannosamine-6-phosphate 2-epimerase 1 from Salmonella paratyphi A (strain ATCC 9150 / SARB42).